A 1356-amino-acid chain; its full sequence is Probable aldehyde oxidase 3 (1356 aa).

The region spanning 10–97 (RAVVVAVNGE…HCAVTTSEGI (88 aa)) is the 2Fe-2S ferredoxin-type domain. 4 residues coordinate [2Fe-2S] cluster: cysteine 49, cysteine 54, cysteine 57, and cysteine 79. The FAD-binding PCMH-type domain occupies 245–437 (VVVTGDGWFH…TFQTFRAAPR (193 aa)). Residues 552-576 (NGSFTNGTANGIVDSSPEKHSNVDS) form a disordered region.

The protein belongs to the xanthine dehydrogenase family. Aldehyde oxidases (AO) are homodimers and heterodimers of AO subunits. It depends on [2Fe-2S] cluster as a cofactor. The cofactor is FAD. Mo-molybdopterin is required as a cofactor.

The catalysed reaction is an aldehyde + O2 + H2O = a carboxylate + H2O2 + H(+). The chain is Probable aldehyde oxidase 3 from Oryza sativa subsp. japonica (Rice).